The sequence spans 434 residues: MYKGFDRSVSLYRQACKVIPGGVNSPVRAFKAVGLNPVFVKKGEGARIYDFDDNEYIDYVCSWGPLILGHRHPRVVGALERCLNEVGTSFGAPTELENILAEMIVEAVPSIEMVRLVNSGTEAAMSALRLARGYTGRNKIVKFEGCYHGHADFLLIKAGSGALTFGVPTSPGIPAAAAAGTIVARYNDLAGLEEIFKLEGEDIAAVIVEPVAGNMGVVPPAPGFLEGLRNLTARYGSLLIFDEVITGFRLAYGGAQELYGVAPDLTCLGKVIGGGLPVGAYGGRREIMEQVAPSGPVYQAGTLSGNPLAVSAGIATLEVLKQPGVYGRLEQTAAALEDALKQAARQTGAEVCFNRAGSMLCAFFTGEEVKDYASACTSDTARYAAFFRSMLEQGVYLAPSQFEAAFVSLAHGKEEIERTAEAARHAFKAAVEQK.

Lys270 bears the N6-(pyridoxal phosphate)lysine mark.

Belongs to the class-III pyridoxal-phosphate-dependent aminotransferase family. HemL subfamily. In terms of assembly, homodimer. Requires pyridoxal 5'-phosphate as cofactor.

It is found in the cytoplasm. The enzyme catalyses (S)-4-amino-5-oxopentanoate = 5-aminolevulinate. Its pathway is porphyrin-containing compound metabolism; protoporphyrin-IX biosynthesis; 5-aminolevulinate from L-glutamyl-tRNA(Glu): step 2/2. This chain is Glutamate-1-semialdehyde 2,1-aminomutase, found in Pelotomaculum thermopropionicum (strain DSM 13744 / JCM 10971 / SI).